A 370-amino-acid chain; its full sequence is MNILLRLIVFALDPLGLGRRFLIRPAVNLGWNVYDRVRSKADEKVGTVRELVLRLGLIAFAVVLIIWLAVFMYAAFYYVYMPAISHTRPVHMQFKTCLETSTPCTFPHAHVSLTKKQQLLMVGQAYKVIVNIDMPESPQNLELGMFMVCAEMRDYDSMLRGHSCRSAMMRYRSPLIRMISTWVLSPLYVLGWKEEFQQVPVEIFSRYLEERQHPITDVYVEIQSQKIQFYTVTLHIVADFTGLRYIMFNWPVLSAIVAISTNLFFILVVFLLSWYHWSDAKWLHSVQIKYARLTKSLEPGVIHSKASSLRDDDDDLVAYSDKSDIADVGGDTLSDVDADDLVLVKKSRSGKRESPDALRKRPTKKTTADH.

A signal peptide spans 1-18 (MNILLRLIVFALDPLGLG). Topologically, residues 19-55 (RRFLIRPAVNLGWNVYDRVRSKADEKVGTVRELVLRL) are cytoplasmic. Residues 56 to 76 (GLIAFAVVLIIWLAVFMYAAF) traverse the membrane as a helical segment. At 77-251 (YYVYMPAISH…GLRYIMFNWP (175 aa)) the chain is on the lumenal side. A helical transmembrane segment spans residues 252–272 (VLSAIVAISTNLFFILVVFLL). The Cytoplasmic portion of the chain corresponds to 273–370 (SWYHWSDAKW…RPTKKTTADH (98 aa)). The interval 346-370 (KSRSGKRESPDALRKRPTKKTTADH) is disordered. The segment covering 350 to 359 (GKRESPDALR) has biased composition (basic and acidic residues).

Widely expressed, with highest levels detected in fat body, moderate levels detected in salivary gland, midgut and muscle, and weak expression detected in brain.

The protein resides in the endoplasmic reticulum membrane. It localises to the lipid droplet. In terms of biological role, acts as a tissue-autonomous lipid modulator, preventing ectopic lipid accumulation in salivary gland (a non-adipose tissue) and in promoting lipid storage in fat tissue. Required for the growth and maturation of small nascent lipid droplets (LDs) into larger mature LDs. This is Seipin from Drosophila melanogaster (Fruit fly).